The primary structure comprises 252 residues: MLREVTITRAIVESYYRDLLNNLELDVAIVGAGPSGMVAAYYLAKGGAKVAIFEKKLSIGGGIWGGGMGFNKVVVQDEAREILDEFGIRYEEFEKGYYVADAIEVATTIASKVVKSGVKIFNMIEVEDLVIKDNRVSGIVINWTPVLMAGLHVDPLTIEAKYVIDSTGHGAQVAQFLVKRGLLKEIPGEGAMWAEQGEKLTVKNTREVFPGLYVTGMAANAIAGAPRMGPIFGGMFLSGRKAAQEILKKLKS.

Residues Ser-35, 54 to 55, Gly-62, Val-126, and 152 to 154 each bind NAD(+); these read EK and HVD. Residues Asp-154 and His-169 each contribute to the Fe cation site. Position 217 (Met-217) interacts with NAD(+). Residue Arg-227 participates in glycine binding.

Belongs to the THI4 family. In terms of assembly, homooctamer; tetramer of dimers. It depends on Fe(2+) as a cofactor.

The catalysed reaction is hydrogen sulfide + glycine + NAD(+) = ADP-5-ethyl-4-methylthiazole-2-carboxylate + nicotinamide + 3 H2O + H(+). It participates in cofactor biosynthesis; thiamine diphosphate biosynthesis. Involved in the biosynthesis of the thiazole moiety of thiamine. Catalyzes the conversion of NAD and glycine to adenosine diphosphate 5-(2-hydroxyethyl)-4-methylthiazole-2-carboxylate (ADT), an adenylated thiazole intermediate, using free sulfide as a source of sulfur. In Pyrococcus horikoshii (strain ATCC 700860 / DSM 12428 / JCM 9974 / NBRC 100139 / OT-3), this protein is Thiamine thiazole synthase.